We begin with the raw amino-acid sequence, 679 residues long: F-box/LRR-repeat protein 5 (679 aa).

A hemerythrin-like region spans residues 1 to 159; it reads MAPFPDEVDV…IKQQVMLQHC (159 aa). The Fe(3+) site is built by histidine 15, histidine 57, glutamate 58, glutamate 61, histidine 80, histidine 126, and glutamate 130. One can recognise an F-box domain in the interval 205-251; it reads RVSVSSLPQELLLRIFRFLGPQDLCRCAQVCSVWTQVTRTGSLWRHL. LRR repeat units lie at residues 316–342, 343–367, 368–395, 396–426, 565–595, 596–623, and 624–649; these read EKLL…SLAY, SSTL…LDLT, QTDV…DLSG, CDKI…LLQA, CWFE…SLSG, CHQI…NLSG, and CPLI…HFYY. [2Fe-2S] cluster is bound by residues cysteine 650, cysteine 664, cysteine 674, and cysteine 675.

In terms of assembly, part of a SCF (SKP1-cullin-F-box) protein ligase complex. It depends on [2Fe-2S] cluster as a cofactor. Ubiquitinated upon iron and oxygen depletion, leading to its degradation by the proteasome. Ubiquitination is regulated by the hemerythrin-like region that acts as an oxygen and iron sensor.

The protein resides in the cytoplasm. It localises to the perinuclear region. It is found in the nucleus. It participates in protein modification; protein ubiquitination. Functionally, component of some SCF (SKP1-cullin-F-box) protein ligase complex that plays a central role in iron homeostasis by promoting the ubiquitination and subsequent degradation of ireb2/irp2. Upon high iron and oxygen level, it specifically recognizes and binds ireb2/irp2, promoting its ubiquitination and degradation by the proteasome. This Danio rerio (Zebrafish) protein is F-box/LRR-repeat protein 5 (fbxl5).